The sequence spans 447 residues: MEADLLCKYEVALRESEPVKYVGHVTAVRGLLIESRGPHAVVGELCRIVLRRQGRPLIAEVVGLAGSTVKLMSYTDTHGVEVGCAVVAEGAALSVPVGDALLGRVLNAFGKAIDGKGEIYAPLRSEVLRASSNPMERLPITRQMVTGVRVLDSLLAVGCGQRLGIFSGSGVGKSTLMGMIARNTDADVSVIALIGERGREVMDFVAHDLGPEGLKRSVIVSATSDESPLARVRGAYTATAIAEYFRDQGKQVLLLFDSLTRFAKAQREIGLASGELPATRGYTPGVFETLPKLLERAGSFSMGSVTAFYTVLVDGDDLDEPISDAVRGIVDGHIVLSRALAQRNHYPAIDVLQSVSRLAHRVLGADMKEAVRIVRRALAVYAEVEDLVRVGAYQQGSDAELDRAIAMRAELERFLTQGAQERVRFQDTVTSLSMLTGLSIAQPPSGV.

An ATP-binding site is contributed by 167 to 174 (SGSGVGKS).

The protein belongs to the ATPase alpha/beta chains family.

The protein localises to the cytoplasm. It catalyses the reaction ATP + H2O + 4 H(+)(in) = ADP + phosphate + 5 H(+)(out). Probable catalytic subunit of a protein translocase for flagellum-specific export, or a proton translocase involved in local circuits at the flagellum. This is Flagellum-specific ATP synthase (fliI) from Treponema pallidum (strain Nichols).